The sequence spans 157 residues: uncharacterized protein (157 aa).

Residues Q36–N63 are a coiled coil.

This is an uncharacterized protein from Bacillus subtilis (strain 168).